The following is a 119-amino-acid chain: Phospholipase A2 A2-actitoxin-Cgg2a (119 aa).

6 cysteine pairs are disulfide-bonded: Cys-25–Cys-119, Cys-27–Cys-43, Cys-42–Cys-101, Cys-49–Cys-94, Cys-61–Cys-87, and Cys-78–Cys-92. Gly-28 and Gly-30 together coordinate Ca(2+). His-46 is a catalytic residue. Asp-47 contributes to the Ca(2+) binding site. Residue Asp-95 is part of the active site.

Belongs to the phospholipase A2 family. In terms of assembly, homodimer. Ca(2+) is required as a cofactor.

It localises to the secreted. Its subcellular location is the nematocyst. The enzyme catalyses a 1,2-diacyl-sn-glycero-3-phosphocholine + H2O = a 1-acyl-sn-glycero-3-phosphocholine + a fatty acid + H(+). In terms of biological role, sea anemone phospholipase A2 (PLA2). When incubated with plasma, this protein shows a moderate anticoagulant activity (0.15 ug of enzyme/200 uL of plasma), inhibiting clotting induced by thrombin. This enzyme also induces myotoxicity, and edema. PLA2 catalyzes the calcium-dependent hydrolysis of the 2-acyl groups in 3-sn-phosphoglycerides. This Condylactis gigantea (Giant Caribbean anemone) protein is Phospholipase A2 A2-actitoxin-Cgg2a.